The chain runs to 136 residues: Galectin-7 (136 aa).

The 131-residue stretch at 6–136 folds into the Galectin domain; it reads HKTPLPQGVR…DVQLHSVKIF (131 aa). 70-76 is an a beta-D-galactoside binding site; the sequence is WGREERG.

Monomer.

Its subcellular location is the cytoplasm. The protein resides in the nucleus. It is found in the secreted. Functionally, could be involved in cell-cell and/or cell-matrix interactions necessary for normal growth control. Pro-apoptotic protein that functions intracellularly upstream of JNK activation and cytochrome c release. This is Galectin-7 (Lgals7) from Rattus norvegicus (Rat).